The primary structure comprises 117 residues: Small ribosomal subunit protein bS6m (117 aa).

The protein belongs to the bacterial ribosomal protein bS6 family. In terms of assembly, component of the mitochondrial small ribosomal subunit (mt-SSU). Mature N.crassa 74S mitochondrial ribosomes consist of a small (37S) and a large (54S) subunit. The 37S small subunit contains a 16S ribosomal RNA (16S mt-rRNA) and 32 different proteins. The 54S large subunit contains a 23S rRNA (23S mt-rRNA) and 42 different proteins.

It localises to the mitochondrion. Its function is as follows. Component of the mitochondrial ribosome (mitoribosome), a dedicated translation machinery responsible for the synthesis of mitochondrial genome-encoded proteins, including at least some of the essential transmembrane subunits of the mitochondrial respiratory chain. The mitoribosomes are attached to the mitochondrial inner membrane and translation products are cotranslationally integrated into the membrane. This Neurospora crassa (strain ATCC 24698 / 74-OR23-1A / CBS 708.71 / DSM 1257 / FGSC 987) protein is Small ribosomal subunit protein bS6m (mrp17).